The primary structure comprises 386 residues: Succinate--CoA ligase [ADP-forming] subunit beta (386 aa).

Residues 9–244 form the ATP-grasp domain; it reads KDILRQFGVP…LDEEDPAEVE (236 aa). ATP-binding positions include Lys-46, 53–55, Glu-99, Ala-102, and Glu-107; that span reads GRG. Asn-199 and Asp-213 together coordinate Mg(2+). Residues Asn-264 and 321 to 323 each bind substrate; that span reads GIM.

Belongs to the succinate/malate CoA ligase beta subunit family. As to quaternary structure, heterotetramer of two alpha and two beta subunits. It depends on Mg(2+) as a cofactor.

It catalyses the reaction succinate + ATP + CoA = succinyl-CoA + ADP + phosphate. The catalysed reaction is GTP + succinate + CoA = succinyl-CoA + GDP + phosphate. Its pathway is carbohydrate metabolism; tricarboxylic acid cycle; succinate from succinyl-CoA (ligase route): step 1/1. Succinyl-CoA synthetase functions in the citric acid cycle (TCA), coupling the hydrolysis of succinyl-CoA to the synthesis of either ATP or GTP and thus represents the only step of substrate-level phosphorylation in the TCA. The beta subunit provides nucleotide specificity of the enzyme and binds the substrate succinate, while the binding sites for coenzyme A and phosphate are found in the alpha subunit. In Delftia acidovorans (strain DSM 14801 / SPH-1), this protein is Succinate--CoA ligase [ADP-forming] subunit beta.